The sequence spans 206 residues: Ras-related protein Rab-7b (206 aa).

15-22 (GDSGVGKT) is a binding site for GTP. 2 positions are modified to phosphoserine: Ser-17 and Ser-23. Phosphothreonine is present on residues Thr-34, Thr-40, and Thr-64. GTP contacts are provided by residues 34-40 (TQQYRAT) and 63-67 (DTAGQ). The Effector region signature appears at 37-45 (YRATVGADF). Ser-72 is subject to Phosphoserine. Tyr-78 and Tyr-88 each carry phosphotyrosine. Residues 125-128 (NKLD) and 157-158 (AK) contribute to the GTP site. 2 S-geranylgeranyl cysteine lipidation sites follow: Cys-205 and Cys-206.

The protein belongs to the small GTPase superfamily. Rab family. Glycosylated.

Its subcellular location is the cytoplasm. The protein localises to the cytoskeleton. In Paramecium octaurelia, this protein is Ras-related protein Rab-7b.